The primary structure comprises 702 residues: Protein-glucosylgalactosylhydroxylysine glucosidase (702 aa).

310 to 311 (WD) provides a ligand contact to substrate. The Proton donor role is filled by Glu-440. A substrate-binding site is contributed by 508-509 (KQ).

Belongs to the glycosyl hydrolase 65 family.

It carries out the reaction (5R)-5-O-[alpha-D-glucosyl-(1-&gt;2)-beta-D-galactosyl]-5-hydroxy-L-lysyl-[collagen] + H2O = (5R)-5-O-(beta-D-galactosyl)-5-hydroxy-L-lysyl-[collagen] + D-glucose. Its function is as follows. Catalyzes the hydrolysis of glucose from the disaccharide unit linked to hydroxylysine residues of collagen and collagen-like proteins. The sequence is that of Protein-glucosylgalactosylhydroxylysine glucosidase from Gallus gallus (Chicken).